Consider the following 408-residue polypeptide: CinA-like protein (408 aa).

The protein belongs to the CinA family.

This Thermotoga maritima (strain ATCC 43589 / DSM 3109 / JCM 10099 / NBRC 100826 / MSB8) protein is CinA-like protein.